Here is a 357-residue protein sequence, read N- to C-terminus: Serpentine receptor class epsilon-30 (357 aa).

7 helical membrane passes run 31–51, 61–81, 121–141, 165–185, 192–212, 253–273, and 283–303; these read IFELSSCILCGYILNLSIFVM, LMFLTVPLFAIWHELIIGKFI, LLIFGGFLQWHTIYSIVFGIL, IPIILTIISQLLSISISLAII, FLARLPFVICAPLSVLVFLFI, LVVVVIFYISICGFGIAALTF, and LIENFLFLHPYPICLTAMFSI.

The protein belongs to the nematode receptor-like protein sre family.

The protein resides in the membrane. This Caenorhabditis elegans protein is Serpentine receptor class epsilon-30 (sre-30).